Consider the following 154-residue polypeptide: Aspartate carbamoyltransferase regulatory chain (154 aa).

Zn(2+)-binding residues include cysteine 109, cysteine 114, cysteine 138, and cysteine 141.

The protein belongs to the PyrI family. In terms of assembly, contains catalytic and regulatory chains. Requires Zn(2+) as cofactor.

Its function is as follows. Involved in allosteric regulation of aspartate carbamoyltransferase. In Photorhabdus laumondii subsp. laumondii (strain DSM 15139 / CIP 105565 / TT01) (Photorhabdus luminescens subsp. laumondii), this protein is Aspartate carbamoyltransferase regulatory chain.